A 202-amino-acid chain; its full sequence is Ribonuclease HII (202 aa).

Positions 14 to 202 (LPLAGVDEAG…VAQFSLFPAA (189 aa)) constitute an RNase H type-2 domain. A divalent metal cation-binding residues include Asp-20, Glu-21, and Asp-111.

Belongs to the RNase HII family. It depends on Mn(2+) as a cofactor. Requires Mg(2+) as cofactor.

The protein localises to the cytoplasm. It carries out the reaction Endonucleolytic cleavage to 5'-phosphomonoester.. Its function is as follows. Endonuclease that specifically degrades the RNA of RNA-DNA hybrids. This Rhizorhabdus wittichii (strain DSM 6014 / CCUG 31198 / JCM 15750 / NBRC 105917 / EY 4224 / RW1) (Sphingomonas wittichii) protein is Ribonuclease HII.